A 539-amino-acid polypeptide reads, in one-letter code: Putative cysteine ligase BshC (539 aa).

Residues Ser146 and 384 to 386 contribute to the ADP site; that span reads ERH. Positions 455–475 form a coiled coil; sequence LLKNAAFIQDQLQFLERTVMK. Residues 490–493, Trp506, and Tyr510 contribute to the ADP site; that span reads RIQN.

Belongs to the BshC family. Homodimer in solution.

Its function is as follows. Involved in bacillithiol (BSH) biosynthesis. May catalyze the last step of the pathway, the addition of cysteine to glucosamine malate (GlcN-Mal) to generate BSH. The sequence is that of Putative cysteine ligase BshC from Bacillus subtilis (strain 168).